The chain runs to 70 residues: U-actitoxin-Ael2c (70 aa).

Positions 1-21 (SYQRFLFLVVVASLIATSLAI) are cleaved as a signal peptide. The propeptide occupies 22-26 (PKDLE). 3 disulfide bridges follow: Cys-32–Cys-65, Cys-34–Cys-58, and Cys-48–Cys-66.

This sequence belongs to the sea anemone type 3 (BDS) potassium channel toxin family.

It localises to the secreted. Its subcellular location is the nematocyst. Potently and selectively inhibits voltage-gated potassium channels Kv11/KCNH/ERG. Acts as a gating-modifier toxin that shifts the voltage-dependence of ERG activation in the positive direction and suppresses its current amplitudes elicited by strong depolarizing pulses that maximally activate the channels. The polypeptide is U-actitoxin-Ael2c (Anthopleura elegantissima (Green aggregating anemone)).